We begin with the raw amino-acid sequence, 816 residues long: Two pore channel protein 1 (816 aa).

Residues 1–112 (MAVSLDDDVP…AHNHLFYLME (112 aa)) are Cytoplasmic-facing. A disordered region spans residues 17–64 (EGGSAPLAPSNGLGQEELPSKNGGSYAIHDSQAPSLSSGGESSPSSPA). The span at 50 to 63 (PSLSSGGESSPSSP) shows a compositional bias: low complexity. Residues 113–133 (LATALLLLLLSLCEAPAVPAL) form a helical membrane-spanning segment. Residue arginine 134 is a topological domain, extracellular. A helical transmembrane segment spans residues 135–155 (LGIYVHATLELFALMVVVFEL). Residues 156 to 177 (CMKLRWLGLHTFIRHKRTMVKT) are Cytoplasmic-facing. Residues 178–198 (SVLVVQFVEAIVVLVRQMSHV) traverse the membrane as a helical segment. Over 199-200 (RV) the chain is Extracellular. Residues 201–220 (TRALRCIFLVDCRYCGGVRR) form a helical membrane-spanning segment. At 221–234 (NLRQIFQSLPPFMD) the chain is on the cytoplasmic side. The chain crosses the membrane as a helical span at residues 235–255 (ILLLLLFFMIIFAILGFYLFS). Residues 256 to 262 (PNPSDPY) are Extracellular-facing. Positions 263-286 (FSTLENSIVSLFVLLTTANFPDVM) form an intramembrane region, helical; Pore-forming. The Extracellular segment spans residues 287–294 (MPSYSRNP). The chain crosses the membrane as a helical span at residues 295–315 (WSCVFFIVYLSIELYFIMNLL). Topologically, residues 316–444 (LAVVFDTFND…NILVKSKAFQ (129 aa)) are cytoplasmic. The chain crosses the membrane as a helical span at residues 445–465 (YFMYLVVAVNGVWILVETFML). Topologically, residues 466–479 (KGGNFFSKHVPWSY) are extracellular. Residues 480 to 500 (LVFLTIYGVELFLKVAGLGPV) form a helical membrane-spanning segment. Topologically, residues 501–503 (EYL) are cytoplasmic. A helical membrane pass occupies residues 504–526 (SSGWNLFDFSVTVFAFLGLLALA). Residues 527–534 (LNMEPFYF) lie on the Extracellular side of the membrane. Residues 535-549 (IVVLRPLQLLRLFKL) traverse the membrane as a helical segment. Residues 550–573 (KERYRNVLDTMFELLPRMASLGLT) are Cytoplasmic-facing. The chain crosses the membrane as a helical span at residues 574–594 (LLIFYYSFAIVGMEFFCGIVF). Residues 595–629 (PNCCNTSTVADAYRWRNHTVGNRTVVEEGYYYLNN) are Extracellular-facing. 3 N-linked (GlcNAc...) asparagine glycosylation sites follow: asparagine 599, asparagine 611, and asparagine 616. The segment at residues 630-653 (FDNILNSFVTLFELTVVNNWYIIM) is an intramembrane region (helical; Pore-forming). Over 654–670 (EGVTSQTSHWSRLYFMT) the chain is Extracellular. Residues 671-691 (FYIVTMVVMTIIVAFILEAFV) traverse the membrane as a helical segment. The Cytoplasmic segment spans residues 692-816 (FRMNYSRKNQ…GSRQRSQTVT (125 aa)). The stretch at 769-796 (SLKMYQEEIQEWYEEHAREQEQQRQLSS) forms a coiled coil. Residues 782-816 (EEHAREQEQQRQLSSSAAPAAQQPPGSRQRSQTVT) are disordered. Positions 791–816 (QRQLSSSAAPAAQQPPGSRQRSQTVT) are enriched in low complexity.

The protein belongs to the calcium channel alpha-1 subunit (TC 1.A.1.11) family. Two pore calcium channel subfamily. In terms of assembly, dimer. Interacts with MTOR; the interaction is required for TPCN1 ATP sensitivity. Interacts with STX7, STX8 and STX12. Interacts with JPT2. Found in a complex with LSM12, TPCN1 and TPCN2. Post-translationally, N-glycosylated. As to expression, highest expression found in the heart and kidney, and lowest expression found in the spleen.

It is found in the lysosome membrane. The protein resides in the endosome membrane. Its subcellular location is the early endosome membrane. The protein localises to the recycling endosome membrane. It carries out the reaction Na(+)(in) = Na(+)(out). It catalyses the reaction Ca(2+)(in) = Ca(2+)(out). With respect to regulation, na(+) current is inhibited by ATP in a MTORC-dependent manner. ATP sensitivity is independent of PI(3,5)P2. Probably regulated by Mg(2+) ions, cytosolic Mg(2+) selectively inhibits outward current while lysosomal Mg(2+) modestly inhibits both the outward and inward currents. In the absence of Mg(2+), NAADP readily activates TPCN2, with properties similar to PI(3,5)P2. Both current elicited by PI(3,5)P2 as well as NAADP are inhibited by tetrandrine. In terms of biological role, intracellular channel initially characterized as a non-selective Ca(2+)-permeable channel activated by NAADP (nicotinic acid adenine dinucleotide phosphate), it is also a voltage-gated highly-selective Na(+) channel activated directly by PI(3,5)P2 (phosphatidylinositol 3,5-bisphosphate) that senses pH changes and confers electrical excitability to organelles. Localizes to the early and recycling endosomes membranes where it plays a role in the uptake and processing of proteins and regulates organellar membrane excitability, membrane trafficking and pH homeostasis. Ion selectivity is not fixed but rather agonist-dependent and under defined ionic conditions, can be readily activated by both NAADP and PI(3,5)P2. Required for mTOR-dependent nutrient sensing. Its function is as follows. (Microbial infection) During Ebola virus (EBOV) infection, controls the movement of endosomes containing virus particles and is required by EBOV to escape from the endosomal network into the cell cytoplasm. The sequence is that of Two pore channel protein 1 from Homo sapiens (Human).